Here is a 66-residue protein sequence, read N- to C-terminus: Large ribosomal subunit protein bL32 (66 aa).

Belongs to the bacterial ribosomal protein bL32 family.

This is Large ribosomal subunit protein bL32 from Rickettsia bellii (strain OSU 85-389).